Reading from the N-terminus, the 250-residue chain is MSLKILVPIKRVVDYAVKIRVKGDKSGVETANVKMSMNPFDEIAVEEAIRIKEKNLAKEIIAVSMGPKTSQETIRTAIAMGADKGIHVETTAELQPLSVAKLLKELVDKEKPNLIILGKQAIDDDCNQTAQMLAGLLNWPQATFASKVDIKDDSVHVTREIDGGLETLSMKLPAIISCDLRLNEPRYAKLQNIMKSKKAELKVETPESLNVDTNCNLKIISVEEPPKRSGGVKVESVENVVEALKKHALI.

This sequence belongs to the ETF beta-subunit/FixA family. As to quaternary structure, heterodimer of an alpha and a beta subunit. Requires FAD as cofactor. It depends on AMP as a cofactor.

The protein resides in the mitochondrion matrix. In terms of biological role, the electron transfer flavoprotein serves as a specific electron acceptor for several dehydrogenases, including five acyl-CoA dehydrogenases, glutaryl-CoA and sarcosine dehydrogenase. It transfers the electrons to the main mitochondrial respiratory chain via ETF-ubiquinone oxidoreductase (ETF dehydrogenase). In Dictyostelium discoideum (Social amoeba), this protein is Electron transfer flavoprotein subunit beta (etfb).